The following is a 240-amino-acid chain: Thymidylate kinase (240 aa).

Residue 10–17 (GINGVGKS) participates in ATP binding.

This sequence belongs to the thymidylate kinase family.

It carries out the reaction dTMP + ATP = dTDP + ADP. It participates in pyrimidine metabolism; dTTP biosynthesis. Its function is as follows. Catalyzes the conversion of dTMP to dTDP. The sequence is that of Thymidylate kinase (TMK) from African swine fever virus (strain Badajoz 1971 Vero-adapted) (Ba71V).